The sequence spans 461 residues: L-serine dehydratase (461 aa).

This sequence belongs to the iron-sulfur dependent L-serine dehydratase family. [4Fe-4S] cluster serves as cofactor.

The enzyme catalyses L-serine = pyruvate + NH4(+). The protein operates within carbohydrate biosynthesis; gluconeogenesis. In Mycobacterium bovis (strain ATCC BAA-935 / AF2122/97), this protein is L-serine dehydratase (sdaA).